We begin with the raw amino-acid sequence, 170 residues long: Ribosome maturation factor RimM (170 aa).

The region spanning 98 to 170 (EGQYYWADLE…RIELDWDPDF (73 aa)) is the PRC barrel domain.

The protein belongs to the RimM family. As to quaternary structure, binds ribosomal protein uS19.

The protein resides in the cytoplasm. In terms of biological role, an accessory protein needed during the final step in the assembly of 30S ribosomal subunit, possibly for assembly of the head region. Essential for efficient processing of 16S rRNA. May be needed both before and after RbfA during the maturation of 16S rRNA. It has affinity for free ribosomal 30S subunits but not for 70S ribosomes. This Alkalilimnicola ehrlichii (strain ATCC BAA-1101 / DSM 17681 / MLHE-1) protein is Ribosome maturation factor RimM.